The primary structure comprises 144 residues: Large ribosomal subunit protein uL11 (144 aa).

This sequence belongs to the universal ribosomal protein uL11 family. As to quaternary structure, part of the ribosomal stalk of the 50S ribosomal subunit. Interacts with L10 and the large rRNA to form the base of the stalk. L10 forms an elongated spine to which L12 dimers bind in a sequential fashion forming a multimeric L10(L12)X complex. Post-translationally, one or more lysine residues are methylated.

Forms part of the ribosomal stalk which helps the ribosome interact with GTP-bound translation factors. The polypeptide is Large ribosomal subunit protein uL11 (Gluconobacter oxydans (strain 621H) (Gluconobacter suboxydans)).